The chain runs to 338 residues: Phenylalanine--tRNA ligase alpha subunit (338 aa).

Glu-253 provides a ligand contact to Mg(2+).

It belongs to the class-II aminoacyl-tRNA synthetase family. Phe-tRNA synthetase alpha subunit type 1 subfamily. In terms of assembly, tetramer of two alpha and two beta subunits. Mg(2+) serves as cofactor.

The protein resides in the cytoplasm. It catalyses the reaction tRNA(Phe) + L-phenylalanine + ATP = L-phenylalanyl-tRNA(Phe) + AMP + diphosphate + H(+). The polypeptide is Phenylalanine--tRNA ligase alpha subunit (Syntrophotalea carbinolica (strain DSM 2380 / NBRC 103641 / GraBd1) (Pelobacter carbinolicus)).